A 432-amino-acid chain; its full sequence is Calcium uptake protein 2, mitochondrial (432 aa).

The N-terminal 22 residues, 1-22 (MAAAAGRSAWLAAWGGRLRRGL), are a transit peptide targeting the mitochondrion. The EF-hand 1 domain maps to 169–204 (KPHSGFHVAFKMLDVDGNEMIERKEFVKLQKIISKQ). Ca(2+)-binding residues include D182, D184, N186, M188, E190, and E193. At S202 the chain carries Phosphoserine. The EF-hand 2; degenerate domain occupies 224 to 259 (EPGVNTTLQVRFFGKRGEKKLHYKEFRRFMENLQTE). The EF-hand 3; degenerate domain maps to 290 to 325 (TENKDIYWRNVREKLSVGESISLDEFKSFCHFTTHL). The 36-residue stretch at 359-394 (LSDNLLDTVFKIFDLDGDECLSHGEFLGVLKNRMHR) folds into the EF-hand 4 domain. Residues D372, D374, D376, C378, and E383 each coordinate Ca(2+).

This sequence belongs to the MICU1 family. MICU2 subfamily. As to quaternary structure, heterodimer; disulfide-linked; heterodimerizes with MICU1. Component of the uniplex complex, composed of MCU, EMRE/SMDT1, MICU1 and MICU2 in a 4:4:1:1 stoichiometry. In terms of tissue distribution, predominantly expressed in stomach, intestine, skeletal muscle, kidney, heart, testis, prostate and uterus.

The protein localises to the mitochondrion intermembrane space. It localises to the mitochondrion inner membrane. In terms of biological role, calcium sensor of the mitochondrial calcium uniporter (MCU) channel, which senses calcium level via its EF-hand domains. MICU1 and MICU2 form a disulfide-linked heterodimer that stimulates and inhibits MCU activity, depending on the concentration of calcium. At low calcium levels, MICU1 occludes the pore of the MCU channel, preventing mitochondrial calcium uptake. At higher calcium levels, calcium-binding to MICU1 and MICU2 induces a conformational change that weakens MCU-MICU1 interactions and moves the MICU1-MICU2 heterodimer away from the pore, allowing calcium permeation through the MCU channel. In Mus musculus (Mouse), this protein is Calcium uptake protein 2, mitochondrial.